The following is a 283-amino-acid chain: Cyclin-C (283 aa).

In terms of domain architecture, Cyclin N-terminal spans 46–144 (NVIQALGEHL…ILECEFYLLE (99 aa)). The interval 252–283 (SILSKMPKPKPPPNSDGEQGTNGSQSSGYSQS) is disordered. The segment covering 267 to 283 (DGEQGTNGSQSSGYSQS) has biased composition (polar residues).

This sequence belongs to the cyclin family. Cyclin C subfamily. As to quaternary structure, component of the Mediator complex. The cylin/CDK pair formed by ccnc/cdk8 also associates with the large subunit of RNA polymerase II.

It is found in the nucleus. In terms of biological role, component of the Mediator complex, a coactivator involved in regulated gene transcription of nearly all RNA polymerase II-dependent genes. Mediator functions as a bridge to convey information from gene-specific regulatory proteins to the basal RNA polymerase II transcription machinery. Mediator is recruited to promoters by direct interactions with regulatory proteins and serves as a scaffold for the assembly of a functional preinitiation complex with RNA polymerase II and the general transcription factors. Binds to and activates cyclin-dependent kinase cdk8 that phosphorylates the CTD (C-terminal domain) of the large subunit of RNA polymerase II (RNAp II), which may inhibit the formation of a transcription initiation complex. This chain is Cyclin-C (ccnc), found in Xenopus laevis (African clawed frog).